A 267-amino-acid polypeptide reads, in one-letter code: Tryptophan synthase alpha chain (267 aa).

Residues E49 and D60 each act as proton acceptor in the active site.

This sequence belongs to the TrpA family. As to quaternary structure, tetramer of two alpha and two beta chains.

The catalysed reaction is (1S,2R)-1-C-(indol-3-yl)glycerol 3-phosphate + L-serine = D-glyceraldehyde 3-phosphate + L-tryptophan + H2O. It functions in the pathway amino-acid biosynthesis; L-tryptophan biosynthesis; L-tryptophan from chorismate: step 5/5. Functionally, the alpha subunit is responsible for the aldol cleavage of indoleglycerol phosphate to indole and glyceraldehyde 3-phosphate. This Chloroflexus aggregans (strain MD-66 / DSM 9485) protein is Tryptophan synthase alpha chain.